A 373-amino-acid chain; its full sequence is Chaperone protein DnaJ (373 aa).

One can recognise a J domain in the interval 4–69 (NYYEILEISQ…EKRSIYDRYG (66 aa)). The CR-type zinc-finger motif lies at 133 to 210 (GCKKKIDFSY…CHGNGYEEIK (78 aa)). Residues Cys-146, Cys-149, Cys-162, Cys-165, Cys-184, Cys-187, Cys-198, and Cys-201 each coordinate Zn(2+). 4 CXXCXGXG motif repeats span residues 146 to 153 (CKSCKGSG), 162 to 169 (CPHCGGKG), 184 to 191 (CDHCKGSG), and 198 to 205 (CKTCHGNG).

The protein belongs to the DnaJ family. Homodimer. It depends on Zn(2+) as a cofactor.

The protein resides in the cytoplasm. Functionally, participates actively in the response to hyperosmotic and heat shock by preventing the aggregation of stress-denatured proteins and by disaggregating proteins, also in an autonomous, DnaK-independent fashion. Unfolded proteins bind initially to DnaJ; upon interaction with the DnaJ-bound protein, DnaK hydrolyzes its bound ATP, resulting in the formation of a stable complex. GrpE releases ADP from DnaK; ATP binding to DnaK triggers the release of the substrate protein, thus completing the reaction cycle. Several rounds of ATP-dependent interactions between DnaJ, DnaK and GrpE are required for fully efficient folding. Also involved, together with DnaK and GrpE, in the DNA replication of plasmids through activation of initiation proteins. The chain is Chaperone protein DnaJ from Campylobacter lari (strain RM2100 / D67 / ATCC BAA-1060).